The following is a 2564-amino-acid chain: Spectrin beta chain, non-erythrocytic 4 (2564 aa).

Residues 1–37 are disordered; the sequence is MAQVPGEVDNMEGLPAPNNNPAARWESPDRGWEREQP. Positions 1-282 are actin-binding; that stretch reads MAQVPGEVDN…IITYVVSFYH (282 aa). The span at 26–36 shows a compositional bias: basic and acidic residues; sequence ESPDRGWEREQ. 2 Calponin-homology (CH) domains span residues 61–165 and 180–285; these read AVQK…LRFQ and RSAK…HYFS. Spectrin repeat units follow at residues 311–418, 430–533, 536–641, 774–879, 884–982, 1089–1196, 1306–1407, 1412–1512, 1515–1617, 1623–1725, 1728–1830, 1835–1935, 1944–2046, and 2049–2123; these read IERY…AALR, LAQR…RLEQ, ALQK…AELE, ALHQ…WLRD, YRMF…RKEE, RLQR…EALV, ELQH…RQLF, ADQL…RLLL, KELH…QQVL, VEQY…ALEQ, WLYQ…AQLL, ELHK…EDAR, ALRF…WLQQ, and EVHQ…QSKQ. Residues 1853–1872 form a disordered region; sequence KRRRLPRLTTPPEPRPSASS. Residues 2208 to 2225 show a composition bias toward low complexity; that stretch reads PAAPEDAAETPATPAAAE. Disordered stretches follow at residues 2208–2439 and 2533–2564; these read PAAP…KSSN and ARWGQTLPTTSSTDEGNPKREGGDRRASGRRK. Basic and acidic residues-rich tracts occupy residues 2227-2254, 2268-2278, and 2287-2318; these read VRPRPERQESADRAEELPRRRRPERQES, ERQESAEHEAA, and EQMERRRERRERRLERQESSEQEMPIRGDLVK. Positions 2343 to 2355 are enriched in pro residues; it reads PSLPQPRELPPGR. Basic and acidic residues-rich tracts occupy residues 2362–2377 and 2424–2435; these read LPERTPRPDRPRARDR and FLLRKRELDANR. One can recognise a PH domain in the interval 2418-2527; it reads TVQHEGFLLR…WLEAVASSVA (110 aa). The segment covering 2538 to 2547 has biased composition (polar residues); the sequence is TLPTTSSTDE. Positions 2548 to 2564 are enriched in basic and acidic residues; sequence GNPKREGGDRRASGRRK.

It belongs to the spectrin family. In terms of tissue distribution, expressed in skeletal muscle at the sarcolemma and in the muscle capillaries (at protein level). Abundantly expressed in brain and pancreatic islets.

Its subcellular location is the cytoplasm. It is found in the cytoskeleton. The protein resides in the cell cortex. In Homo sapiens (Human), this protein is Spectrin beta chain, non-erythrocytic 4 (SPTBN4).